Reading from the N-terminus, the 89-residue chain is Otospiralin (89 aa).

The N-terminal stretch at 1–21 is a signal peptide; it reads MQPCVLWWLALGLLLGIPAGA.

Belongs to the otospiralin family. In terms of tissue distribution, ear specific. Expressed in the cochlea and vestibule, but not in the cochlear nerve, cochlear nucleus, spinal chord, muscle, cerebral cortex, cerebellum, diencephalon and olfactory bulb. In the cochlea, expressed in fibrocytes of the spiral limbus, spiral ligament and suprastrial zone. In the vestibule, expressed in cells located to the stroma below the macular and crista sensory epithelia and in the subepithelial layer of the walls of semicircular canals and maculae.

It localises to the secreted. Its function is as follows. May be essential for the survival of the neurosensory epithelium of the inner ear. This is Otospiralin (Otos) from Rattus norvegicus (Rat).